The primary structure comprises 571 residues: MRTSQYLFSTLKETPAEASIVSHQLMLRAGMIRPLASGLYTWLPTGLRVLNKVEKIIREEMDKSGALEVKMAVTQPAELWQESGRWEEYGPELLRFKDRGERDFVIGPTNEEVITDLVRRELSSYKQLPLNLYHIQTKFRDEVRPRFGVMRSREFVMKDAYSFHTTHECLQKTYDVMYETYSNIFNRLGLDFRAVQADTGSIGGSASHEFQVLAQSGEDDVVFSTESDFAANIELAEAVALGERGAATEELRVVDTPNAKTIAELVEQFNQPIEKTVKTLVVHATEESGHKLVALLVRGDHELNEIKAEKVDIVASPLQFATDEEIRAVVGAGTGSLGPINLPMPIVIDRTVANMDNFSAGANQDGKHYFGINWERDLPVPHIADLRNVVEGDPSPDGKGVLQIKRGIEVGHIFQLGTKYSAAMNATVQGEDGRPQTMIMGCYGIGVTRVIAAAIEQHHDERGIIWPDNIAPFKVAIVPMNMHKSESVQQFAEELYRTLTAQGVEVIFDDRKERPGVMFADMELIGVPHMIVIGEKNLEKGEIEYKYRRSGEKEMIAKDQLLDVLKAKFAS.

The protein belongs to the class-II aminoacyl-tRNA synthetase family. ProS type 1 subfamily. As to quaternary structure, homodimer.

Its subcellular location is the cytoplasm. It catalyses the reaction tRNA(Pro) + L-proline + ATP = L-prolyl-tRNA(Pro) + AMP + diphosphate. In terms of biological role, catalyzes the attachment of proline to tRNA(Pro) in a two-step reaction: proline is first activated by ATP to form Pro-AMP and then transferred to the acceptor end of tRNA(Pro). As ProRS can inadvertently accommodate and process non-cognate amino acids such as alanine and cysteine, to avoid such errors it has two additional distinct editing activities against alanine. One activity is designated as 'pretransfer' editing and involves the tRNA(Pro)-independent hydrolysis of activated Ala-AMP. The other activity is designated 'posttransfer' editing and involves deacylation of mischarged Ala-tRNA(Pro). The misacylated Cys-tRNA(Pro) is not edited by ProRS. This chain is Proline--tRNA ligase, found in Pasteurella multocida (strain Pm70).